A 516-amino-acid chain; its full sequence is Cytochrome P450 1A1 (516 aa).

Residues 33–44 (WQPRVPKGLKSP) are mitochondrial targeting signal. O-linked (GlcNAc) serine glycosylation occurs at serine 71. Phenylalanine 228 is a substrate binding site. Cysteine 461 contributes to the heme binding site.

The protein belongs to the cytochrome P450 family. Interacts with cytosolic chaperones HSP70 and HSP90; this interaction is required for initial targeting to mitochondria. Interacts (via mitochondrial targeting signal) with TOMM40 (via N-terminus); this interaction is required for translocation across the mitochondrial outer membrane. Heme is required as a cofactor.

It localises to the endoplasmic reticulum membrane. It is found in the mitochondrion inner membrane. The protein localises to the microsome membrane. The protein resides in the cytoplasm. The catalysed reaction is an organic molecule + reduced [NADPH--hemoprotein reductase] + O2 = an alcohol + oxidized [NADPH--hemoprotein reductase] + H2O + H(+). It catalyses the reaction estrone + reduced [NADPH--hemoprotein reductase] + O2 = 2-hydroxyestrone + oxidized [NADPH--hemoprotein reductase] + H2O + H(+). The enzyme catalyses estrone + reduced [NADPH--hemoprotein reductase] + O2 = 4-hydroxyestrone + oxidized [NADPH--hemoprotein reductase] + H2O + H(+). It carries out the reaction estrone + reduced [NADPH--hemoprotein reductase] + O2 = 6alpha-hydroxyestrone + oxidized [NADPH--hemoprotein reductase] + H2O + H(+). The catalysed reaction is estrone + reduced [NADPH--hemoprotein reductase] + O2 = 15alpha-hydroxyestrone + oxidized [NADPH--hemoprotein reductase] + H2O + H(+). It catalyses the reaction estrone + reduced [NADPH--hemoprotein reductase] + O2 = 16alpha-hydroxyestrone + oxidized [NADPH--hemoprotein reductase] + H2O + H(+). The enzyme catalyses 17beta-estradiol + reduced [NADPH--hemoprotein reductase] + O2 = 2-hydroxy-17beta-estradiol + oxidized [NADPH--hemoprotein reductase] + H2O + H(+). It carries out the reaction 17beta-estradiol + reduced [NADPH--hemoprotein reductase] + O2 = 4-hydroxy-17beta-estradiol + oxidized [NADPH--hemoprotein reductase] + H2O + H(+). The catalysed reaction is 17beta-estradiol + reduced [NADPH--hemoprotein reductase] + O2 = 6alpha-hydroxy-17beta-estradiol + oxidized [NADPH--hemoprotein reductase] + H2O + H(+). It catalyses the reaction 17beta-estradiol + reduced [NADPH--hemoprotein reductase] + O2 = 7alpha-hydroxy-17beta-estradiol + oxidized [NADPH--hemoprotein reductase] + H2O + H(+). The enzyme catalyses 17beta-estradiol + reduced [NADPH--hemoprotein reductase] + O2 = 15alpha-hydroxy-17beta-estradiol + oxidized [NADPH--hemoprotein reductase] + H2O + H(+). It carries out the reaction (5Z,8Z,11Z)-eicosatrienoate + reduced [NADPH--hemoprotein reductase] + O2 = 19-hydroxy-(5Z,8Z,11Z)-eicosatrienoate + oxidized [NADPH--hemoprotein reductase] + H2O + H(+). The catalysed reaction is (5Z,8Z,11Z,14Z)-eicosatetraenoate + reduced [NADPH--hemoprotein reductase] + O2 = 16-hydroxy-(5Z,8Z,11Z,14Z)-eicosatetraenoate + oxidized [NADPH--hemoprotein reductase] + H2O + H(+). It catalyses the reaction (5Z,8Z,11Z,14Z)-eicosatetraenoate + reduced [NADPH--hemoprotein reductase] + O2 = 17-hydroxy-(5Z,8Z,11Z,14Z)-eicosatetraenoate + oxidized [NADPH--hemoprotein reductase] + H2O + H(+). The enzyme catalyses (5Z,8Z,11Z,14Z)-eicosatetraenoate + reduced [NADPH--hemoprotein reductase] + O2 = 18-hydroxy-(5Z,8Z,11Z,14Z)-eicosatetraenoate + oxidized [NADPH--hemoprotein reductase] + H2O + H(+). It carries out the reaction (5Z,8Z,11Z,14Z)-eicosatetraenoate + reduced [NADPH--hemoprotein reductase] + O2 = 19-hydroxy-(5Z,8Z,11Z,14Z)-eicosatetraenoate + oxidized [NADPH--hemoprotein reductase] + H2O + H(+). The catalysed reaction is (5Z,8Z,11Z,14Z,17Z)-eicosapentaenoate + reduced [NADPH--hemoprotein reductase] + O2 = 19-hydroxy-(5Z,8Z,11Z,14Z,17Z)-eicosapentaenoate + oxidized [NADPH--hemoprotein reductase] + H2O + H(+). It catalyses the reaction (5Z,8Z,11Z,14Z)-eicosatetraenoate + reduced [NADPH--hemoprotein reductase] + O2 = (8R,9S)-epoxy-(5Z,11Z,14Z)-eicosatrienoate + oxidized [NADPH--hemoprotein reductase] + H2O + H(+). The enzyme catalyses (5Z,8Z,11Z,14Z)-eicosatetraenoate + reduced [NADPH--hemoprotein reductase] + O2 = (11R,12S)-epoxy-(5Z,8Z,14Z)-eicosatrienoate + oxidized [NADPH--hemoprotein reductase] + H2O + H(+). It carries out the reaction (5Z,8Z,11Z,14Z)-eicosatetraenoate + reduced [NADPH--hemoprotein reductase] + O2 = (14S,15R)-epoxy-(5Z,8Z,11Z)-eicosatrienoate + oxidized [NADPH--hemoprotein reductase] + H2O + H(+). The catalysed reaction is (5Z,8Z,11Z,14Z)-eicosatetraenoate + reduced [NADPH--hemoprotein reductase] + O2 = (14R,15S)-epoxy-(5Z,8Z,11Z)-eicosatrienoate + oxidized [NADPH--hemoprotein reductase] + H2O + H(+). It catalyses the reaction (5Z,8Z,11Z,14Z,17Z)-eicosapentaenoate + reduced [NADPH--hemoprotein reductase] + O2 = (17R,18S)-epoxy-(5Z,8Z,11Z,14Z)-eicosatetraenoate + oxidized [NADPH--hemoprotein reductase] + H2O + H(+). The enzyme catalyses (4Z,7Z,10Z,13Z,16Z,19Z)-docosahexaenoate + reduced [NADPH--hemoprotein reductase] + O2 = (19S,20R)-epoxy-(4Z,7Z,10Z,13Z,16Z)-docosapentaenoate + oxidized [NADPH--hemoprotein reductase] + H2O + H(+). It carries out the reaction (4Z,7Z,10Z,13Z,16Z,19Z)-docosahexaenoate + reduced [NADPH--hemoprotein reductase] + O2 = (19R,20S)-epoxy-(4Z,7Z,10Z,13Z,16Z)-docosapentaenoate + oxidized [NADPH--hemoprotein reductase] + H2O + H(+). The catalysed reaction is all-trans-retinol + reduced [NADPH--hemoprotein reductase] + O2 = all-trans-retinal + oxidized [NADPH--hemoprotein reductase] + 2 H2O + H(+). It catalyses the reaction all-trans-retinal + reduced [NADPH--hemoprotein reductase] + O2 = all-trans-retinoate + oxidized [NADPH--hemoprotein reductase] + H2O + 2 H(+). The enzyme catalyses (13S)-hydroperoxy-(9Z,11E)-octadecadienoate = 13-oxo-(9Z,11E)-octadecadienoate + H2O. It carries out the reaction (12S)-hydroperoxy-(5Z,8Z,10E,14Z)-eicosatetraenoate = 12-oxo-(5Z,8Z,10E,14Z)-eicosatetraenoate + H2O. The catalysed reaction is (15S)-hydroperoxy-(5Z,8Z,11Z,13E)-eicosatetraenoate = 15-oxo-(5Z,8Z,11Z,13E)-eicosatetraenoate + H2O. It catalyses the reaction (5S)-hydroperoxy-(6E,8Z,11Z,14Z)-eicosatetraenoate = 5-oxo-(6E,8Z,11Z,14Z)-eicosatetraenoate + H2O. The protein operates within steroid hormone biosynthesis. It participates in lipid metabolism; fatty acid metabolism. Its pathway is cofactor metabolism; retinol metabolism. Its function is as follows. A cytochrome P450 monooxygenase involved in the metabolism of various endogenous substrates, including fatty acids, steroid hormones and vitamins. Mechanistically, uses molecular oxygen inserting one oxygen atom into a substrate, and reducing the second into a water molecule, with two electrons provided by NADPH via cytochrome P450 reductase (CPR; NADPH-ferrihemoprotein reductase). Catalyzes the hydroxylation of carbon-hydrogen bonds. Exhibits high catalytic activity for the formation of hydroxyestrogens from estrone (E1) and 17beta-estradiol (E2), namely 2-hydroxy E1 and E2, as well as D-ring hydroxylated E1 and E2 at the C15alpha and C16alpha positions. Displays different regioselectivities for polyunsaturated fatty acids (PUFA) hydroxylation. Catalyzes the epoxidation of double bonds of certain PUFA. Converts arachidonic acid toward epoxyeicosatrienoic acid (EET) regioisomers, 8,9-, 11,12-, and 14,15-EET, that function as lipid mediators in the vascular system. Displays an absolute stereoselectivity in the epoxidation of eicosapentaenoic acid (EPA) producing the 17(R),18(S) enantiomer. May play an important role in all-trans retinoic acid biosynthesis in extrahepatic tissues. Catalyzes two successive oxidative transformation of all-trans retinol to all-trans retinal and then to the active form all-trans retinoic acid. May also participate in eicosanoids metabolism by converting hydroperoxide species into oxo metabolites (lipoxygenase-like reaction, NADPH-independent). This chain is Cytochrome P450 1A1 (CYP1A1), found in Balaenoptera acutorostrata (Common minke whale).